A 729-amino-acid chain; its full sequence is MDDSTQAAEAVITTPTGARTVRFETGRLARQAAGAVVAHLGDTMVLSATTVSRSPKEQLDFFPLTVDVEERMYAAGRIPGSFFRREGRPSEDAILTCRLIDRPLRPSFAKGLRNEIQVVATVLALDPDTLYDVVAINAASASTMLAGLPFSGPIGATRVGYVDGDWIAFPTHSELERATFDMVVAGRVLEDGSDVAIMMVEAEATPGTVALVAGGAPAPTEEVVAAGLEAAKPAIRELCRAQSELAAGAAKPQREFPLFIDYHDDVLETLTAAVGEELAAALRIAGKAERETELERVRALAVEKVSGQFEGRDKEISPAYRALTKKLVRSRIVTDGVRIDGRSTTEIRELSAEVDYIPRVHGSALFERGETQILGVTTLAMLRMEQTVDTLNPDRTKRYMHNYNFPPYSTGETGRVGSPKRREIGHGALAERALLPVLPSREEFPYAIRQVSEALSSNGSTSMGSVCASTLSLLNAGVPLKAPVAGIAMGLIREGDAFVTLTDILGAEDAYGDMDFKVAGTQEFVTALQLDTKLDGIPASVLAGALQQARAARLTILEVMAEAIGGPDEMSAHAPRVISVKIPVDKIGEVIGPKGKMINQIQADSGAEITVEDDGTIYIGAADGPAAETARSAINAIANPQMPEVGERYLGTIVKITNFGAFVSLTPGKDGLLHVSKLKQLAGGKRVEKVEDVLSVGQKLQVEITEIDARGKISLAPGAESIDTVSAGS.

The tract at residues 399–419 (YMHNYNFPPYSTGETGRVGSP) is disordered. 2 residues coordinate Mg(2+): Asp-509 and Asp-515. The KH domain maps to 575–634 (PRVISVKIPVDKIGEVIGPKGKMINQIQADSGAEITVEDDGTIYIGAADGPAAETARSAI). The S1 motif domain maps to 646–718 (GERYLGTIVK…ARGKISLAPG (73 aa)).

Belongs to the polyribonucleotide nucleotidyltransferase family. Mg(2+) serves as cofactor.

The protein resides in the cytoplasm. The catalysed reaction is RNA(n+1) + phosphate = RNA(n) + a ribonucleoside 5'-diphosphate. Its function is as follows. Involved in mRNA degradation. Catalyzes the phosphorolysis of single-stranded polyribonucleotides processively in the 3'- to 5'-direction. This chain is Polyribonucleotide nucleotidyltransferase, found in Parafrankia sp. (strain EAN1pec).